The primary structure comprises 300 residues: UPF0282 protein TGAM_0379 (300 aa).

Belongs to the UPF0282 family.

The chain is UPF0282 protein TGAM_0379 from Thermococcus gammatolerans (strain DSM 15229 / JCM 11827 / EJ3).